The primary structure comprises 347 residues: Bombesin receptor-activated protein C6orf89 (347 aa).

Residues 1 to 58 (MDLAANEISIYDKLSETVDLVRQTGHQCGMSEKAIEKFIRQLLEKNEPQRPPPQYPLL) lie on the Cytoplasmic side of the membrane. A helical transmembrane segment spans residues 59–79 (IVVYKVLATLGLILLTAYFVI). The Extracellular segment spans residues 80 to 347 (QPFSPLAPEP…ICDGTAFSEL (268 aa)).

In terms of assembly, homodimer. Interacts with BRS3. Interacts (via N-terminus) with SIN3B. In terms of processing, glycosylated.

It is found in the golgi apparatus membrane. It localises to the midbody. The protein resides in the cytoplasm. Its subcellular location is the nucleus. The protein localises to the nucleolus. Its function is as follows. Exhibits histone deacetylase (HDAC) enhancer properties. May play a role in cell cycle progression and wound repair of bronchial epithelial cells. The sequence is that of Bombesin receptor-activated protein C6orf89 (C6orf89) from Homo sapiens (Human).